The following is a 100-amino-acid chain: Large ribosomal subunit protein uL23 (100 aa).

Belongs to the universal ribosomal protein uL23 family. In terms of assembly, part of the 50S ribosomal subunit. Contacts protein L29, and trigger factor when it is bound to the ribosome.

Its function is as follows. One of the early assembly proteins it binds 23S rRNA. One of the proteins that surrounds the polypeptide exit tunnel on the outside of the ribosome. Forms the main docking site for trigger factor binding to the ribosome. The protein is Large ribosomal subunit protein uL23 of Synechococcus sp. (strain CC9311).